Consider the following 702-residue polypeptide: Ribosomal RNA large subunit methyltransferase K/L (702 aa).

The 112-residue stretch at 43–154 folds into the THUMP domain; the sequence is LIYQSLMWSR…KETASIALDL (112 aa).

It belongs to the methyltransferase superfamily. RlmKL family.

Its subcellular location is the cytoplasm. The catalysed reaction is guanosine(2445) in 23S rRNA + S-adenosyl-L-methionine = N(2)-methylguanosine(2445) in 23S rRNA + S-adenosyl-L-homocysteine + H(+). The enzyme catalyses guanosine(2069) in 23S rRNA + S-adenosyl-L-methionine = N(2)-methylguanosine(2069) in 23S rRNA + S-adenosyl-L-homocysteine + H(+). In terms of biological role, specifically methylates the guanine in position 2445 (m2G2445) and the guanine in position 2069 (m7G2069) of 23S rRNA. The sequence is that of Ribosomal RNA large subunit methyltransferase K/L from Salmonella gallinarum (strain 287/91 / NCTC 13346).